A 174-amino-acid polypeptide reads, in one-letter code: Variant surface antigen B (174 aa).

Residues 1–29 (MKKSIFSKKLLVSFGSLVALASIPLIAIS) form the signal peptide. Residue cysteine 30 is the site of N-palmitoyl cysteine attachment. Cysteine 30 carries the S-diacylglycerol cysteine lipid modification. Positions 32–174 (QTNTDKSQQP…SQDSGNGSTK (143 aa)) are disordered. Residues 38–49 (SQQPGSGSSTSG) show a composition bias toward low complexity. The span at 50 to 75 (GQSGTGLGSGTTTGGQSGTTTGGRSG) shows a compositional bias: gly residues. The segment covering 76-97 (SGSSSSTTGGQTGTGSDSQDSG) has biased composition (low complexity). 7 repeat units span residues 88 to 99 (GTGSDSQDSGAK), 100 to 111 (GTGSDSQDSGAK), 112 to 123 (GTGSDSQDSGAK), 124 to 135 (GTGSDSQDSGAK), 136 to 147 (GTGSDSQDSGAK), 148 to 159 (GTGSDSQDSGAK), and 160 to 171 (GTGSDSQDSGNG). The 7 X 12 AA tandem repeats stretch occupies residues 88-171 (GTGSDSQDSG…GSDSQDSGNG (84 aa)). Positions 102 to 174 (GSDSQDSGAK…SQDSGNGSTK (73 aa)) are enriched in polar residues.

It is found in the cell membrane. Responsible for the antigenic diversity for host adaptation. In Mesomycoplasma hyorhinis (Mycoplasma hyorhinis), this protein is Variant surface antigen B (vlpB).